The sequence spans 432 residues: Enolase (432 aa).

Gln167 lines the (2R)-2-phosphoglycerate pocket. The active-site Proton donor is the Glu209. Asp246, Glu287, and Asp314 together coordinate Mg(2+). Residues Lys339, Arg368, Ser369, and Lys390 each coordinate (2R)-2-phosphoglycerate. Lys339 functions as the Proton acceptor in the catalytic mechanism.

It belongs to the enolase family. The cofactor is Mg(2+).

The protein resides in the cytoplasm. It is found in the secreted. The protein localises to the cell surface. The catalysed reaction is (2R)-2-phosphoglycerate = phosphoenolpyruvate + H2O. Its pathway is carbohydrate degradation; glycolysis; pyruvate from D-glyceraldehyde 3-phosphate: step 4/5. In terms of biological role, catalyzes the reversible conversion of 2-phosphoglycerate (2-PG) into phosphoenolpyruvate (PEP). It is essential for the degradation of carbohydrates via glycolysis. This chain is Enolase, found in Prochlorococcus marinus (strain MIT 9211).